Consider the following 224-residue polypeptide: Cytidylate kinase (224 aa).

11–19 (GPAAAGKST) provides a ligand contact to ATP.

This sequence belongs to the cytidylate kinase family. Type 1 subfamily.

The protein resides in the cytoplasm. It catalyses the reaction CMP + ATP = CDP + ADP. The enzyme catalyses dCMP + ATP = dCDP + ADP. In Listeria monocytogenes serotype 4b (strain CLIP80459), this protein is Cytidylate kinase.